Consider the following 1052-residue polypeptide: MKLVSTWLLVLVVLLCGKRHLGDRLGTRALEKAPCPSCSHLTLKVEFSSTVVEYEYIVAFNGYFTAKARNSFISSALKSSEVENWRIIPRNNPSSDYPSDFEVIQIKEKQKAGLLTLEDHPNIKRVTPQRKVFRSLKFAESNPIVPCNETRWSQKWQSSRPLKRASLSLGSGFWHATGRHSSRRLLRAIPRQVAQTLQADVLWQMGYTGANVRVAVFDTGLSEKHPHFKNVKERTNWTNERTLDDGLGHGTFVAGVIASMRECQGFAPDAELHIFRVFTNNQVSYTSWFLDAFNYAILKKMDVLNLSIGGPDFMDHPFVDKVWELTANNVIMVSAIGNDGPLYGTLNNPADQMDVIGVGGIDFEDNIARFSSRGMTTWELPGGYGRVKPDIVTYGAGVRGSGVKGGCRALSGTSVASPVVAGAVTLLVSTVQKRELVNPASVKQALIASARRLPGVNMFEQGHGKLDLLRAYQILSSYKPQASLSPSYIDLTECPYMWPYCSQPIYYGGMPTIVNVTILNGMGVTGRIVDKPEWRPYLPQNGDNIEVAFSYSSVLWPWSGYLAISISVTKKAASWEGIAQGHIMITVASPAETELHSGAEHTSTVKLPIKVKIIPTPPRSKRVLWDQYHNLRYPPGYFPRDNLRMKNDPLDWNGDHVHTNFRDMYQHLRSMGYFVEVLGAPFTCFDATQYGTLLLVDSEEEYFPEEIAKLRRDVDNGLSLVIFSDWYNTSVMRKVKFYDENTRQWWMPDTGGANIPALNELLSVWNMGFSDGLYEGEFVLANHDMYYASGCSIAKFPEDGVVITQTFKDQGLEVLKQETAVVENVPILGLYQIPSEGGGRIVLYGDSNCLDDSHRQKDCFWLLDALLQYTSYGVTPPSLSHSGNRQRPPSGAGLAPPERMEGNHLHRYSKVLEAHLGDPKPRPLPACPHLSWAKPQPLNETAPSNLWKHQKLLSIDLDKVVLPNFRSNRPQVRPLSPGESGAWDIPGGIMPGRYNQEVGQTIPVFAFLGAMVALAFFVVQISKAKSRPKRRRPRAKRPQLAQQAHPARTPSV.

A signal peptide spans 1-17; the sequence is MKLVSTWLLVLVVLLCG. Positions 18–186 are excised as a propeptide; the sequence is KRHLGDRLGT…TGRHSSRRLL (169 aa). Asn148 carries N-linked (GlcNAc...) asparagine glycosylation. Ser168 carries the post-translational modification Phosphoserine. At 187-999 the chain is on the lumenal side; sequence RAIPRQVAQT…MPGRYNQEVG (813 aa). In terms of domain architecture, Peptidase S8 spans 190–472; sequence PRQVAQTLQA…HGKLDLLRAY (283 aa). The active-site Charge relay system is Asp218. N-linked (GlcNAc...) asparagine glycosylation occurs at Asn236. His249 (charge relay system) is an active-site residue. N-linked (GlcNAc...) asparagine glycosylation is present at Asn305. Ser414 acts as the Charge relay system in catalysis. N-linked (GlcNAc...) asparagine glycans are attached at residues Asn515 and Asn728. Positions 877-887 are enriched in polar residues; that stretch reads PSLSHSGNRQR. The segment at 877–900 is disordered; it reads PSLSHSGNRQRPPSGAGLAPPERM. Asn939 carries an N-linked (GlcNAc...) asparagine glycan. A helical transmembrane segment spans residues 1000–1022; sequence QTIPVFAFLGAMVALAFFVVQIS. Topologically, residues 1023-1052 are cytoplasmic; that stretch reads KAKSRPKRRRPRAKRPQLAQQAHPARTPSV. Residues 1026-1037 are compositionally biased toward basic residues; that stretch reads SRPKRRRPRAKR. Residues 1026-1052 are disordered; sequence SRPKRRRPRAKRPQLAQQAHPARTPSV.

This sequence belongs to the peptidase S8 family. As to quaternary structure, interacts with LYSET; this interaction bridges GNPTAB to MBTPS1. It depends on Ca(2+) as a cofactor. The 148 kDa zymogen is processed progressively into two membrane-bound 120 and 106 kDa forms in the endoplasmic reticulum, and late into a secreted 98 kDa form. The propeptide is autocatalytically removed through an intramolecular cleavage after Leu-186. Further cleavage generates 14, 10, and 8 kDa intermediates.

The protein resides in the endoplasmic reticulum membrane. It is found in the golgi apparatus membrane. It catalyses the reaction Processes precursors containing basic and hydrophobic/aliphatic residues at P4 and P2, respectively, with a relatively relaxed acceptance of amino acids at P1 and P3.. Inhibited by divalent copper and zinc ions, but not by nickel or cobalt. Inhibited by its prosegment, but not smaller fragments. Inhibited by 4-(2-aminoethyl)benzenesulfonyl fluoride (AEBSF), a serine protease inhibitor. Serine protease that cleaves after hydrophobic or small residues, provided that Arg or Lys is in position P4: known substrates include SREBF1/SREBP1, SREBF2/SREBP2, BDNF, GNPTAB, ATF6, ATF6B and FAM20C. Cleaves substrates after Arg-Ser-Val-Leu (SREBP2), Arg-His-Leu-Leu (ATF6), Arg-Gly-Leu-Thr (BDNF) and its own propeptide after Arg-Arg-Leu-Leu. Catalyzes the first step regulated intramembrane proteolysis activation of the sterol regulatory element-binding proteins (SREBPs) SREBF1/SREBP1 and SREBF2/SREBP2. Also mediates the first step of the regulated intramembrane proteolytic activation of the cyclic AMP-dependent transcription factor ATF-6 (ATF6 and ATF6B). Mediates the protein cleavage of GNPTAB into subunit alpha and beta, thereby participating in biogenesis of lysosomes. Cleaves the propeptide from FAM20C which is required for FAM20C secretion from the Golgi apparatus membrane and for enhancement of FAM20C kinase activity, promoting osteoblast differentiation and biomineralization. Involved in the regulation of M6P-dependent Golgi-to-lysosome trafficking of lysosomal enzymes. It is required for the activation of CREB3L2/BBF2H7, a transcriptional activator of MIA3/TANGO and other genes controlling mega vesicle formation. Therefore, it plays a key role in the regulation of mega vesicle-mediated collagen trafficking. In astrocytes and osteoblasts, upon DNA damage and ER stress, mediates the first step of the regulated intramembrane proteolytic activation of the transcription factor CREB3L1, leading to the inhibition of cell-cycle progression. This is Membrane-bound transcription factor site-1 protease (Mbtps1) from Mus musculus (Mouse).